The sequence spans 129 residues: Small ribosomal subunit protein bS6 (129 aa).

It belongs to the bacterial ribosomal protein bS6 family.

Binds together with bS18 to 16S ribosomal RNA. The polypeptide is Small ribosomal subunit protein bS6 (Pelobacter propionicus (strain DSM 2379 / NBRC 103807 / OttBd1)).